The sequence spans 39 residues: LFECVLSCDIKKNGKPCKPKGEKKCSGGWRCKINFCLKV.

Intrachain disulfides connect cysteine 4/cysteine 25, cysteine 8/cysteine 31, and cysteine 17/cysteine 36.

As to expression, expressed by the venom gland.

The protein localises to the secreted. In terms of biological role, toxin that inhibits voltage-gated calcium channels in rat cerebellar granule cells (IC(50)&lt;200 nM). Is lethal to cockroaches. The sequence is that of Omega-theraphotoxin-Asp1a from Aphonopelma sp. (American tarantula).